A 219-amino-acid polypeptide reads, in one-letter code: Orotate phosphoribosyltransferase (219 aa).

K26 contacts 5-phospho-alpha-D-ribose 1-diphosphate. 34–35 (FF) is a binding site for orotate. 5-phospho-alpha-D-ribose 1-diphosphate is bound by residues 72 to 73 (YK), R98, K99, K102, H104, and 124 to 132 (DDVITAGTA). Orotate is bound by residues T128 and R156.

The protein belongs to the purine/pyrimidine phosphoribosyltransferase family. PyrE subfamily. Homodimer. Mg(2+) is required as a cofactor.

The enzyme catalyses orotidine 5'-phosphate + diphosphate = orotate + 5-phospho-alpha-D-ribose 1-diphosphate. It functions in the pathway pyrimidine metabolism; UMP biosynthesis via de novo pathway; UMP from orotate: step 1/2. Catalyzes the transfer of a ribosyl phosphate group from 5-phosphoribose 1-diphosphate to orotate, leading to the formation of orotidine monophosphate (OMP). This is Orotate phosphoribosyltransferase from Stenotrophomonas maltophilia (strain K279a).